A 243-amino-acid polypeptide reads, in one-letter code: Glutathione S-transferase U14 (243 aa).

The GST N-terminal domain maps to 5–87 (DTVKLIGCSD…YLDEAWPSDP (83 aa)). Residues 15–16 (DP), 44–45 (EK), 58–59 (KT), and 71–72 (ES) each bind glutathione. In terms of domain architecture, GST C-terminal spans 93–220 (NAYDRASARF…MPTVEEVTEL (128 aa)). Thr159 carries the phosphothreonine modification.

It belongs to the GST superfamily. Tau family.

The protein resides in the cytoplasm. It is found in the cytosol. The enzyme catalyses RX + glutathione = an S-substituted glutathione + a halide anion + H(+). Functionally, may be involved in the conjugation of reduced glutathione to a wide number of exogenous and endogenous hydrophobic electrophiles and have a detoxification role against certain herbicides. The chain is Glutathione S-transferase U14 (GSTU14) from Arabidopsis thaliana (Mouse-ear cress).